The following is a 195-amino-acid chain: Peptidyl-tRNA hydrolase (195 aa).

Tyr-17 lines the tRNA pocket. His-22 serves as the catalytic Proton acceptor. The tRNA site is built by Tyr-68, Asn-70, and Asn-116.

The protein belongs to the PTH family. Monomer.

It localises to the cytoplasm. It carries out the reaction an N-acyl-L-alpha-aminoacyl-tRNA + H2O = an N-acyl-L-amino acid + a tRNA + H(+). Functionally, hydrolyzes ribosome-free peptidyl-tRNAs (with 1 or more amino acids incorporated), which drop off the ribosome during protein synthesis, or as a result of ribosome stalling. In terms of biological role, catalyzes the release of premature peptidyl moieties from peptidyl-tRNA molecules trapped in stalled 50S ribosomal subunits, and thus maintains levels of free tRNAs and 50S ribosomes. This is Peptidyl-tRNA hydrolase from Shewanella baltica (strain OS155 / ATCC BAA-1091).